The chain runs to 243 residues: Large ribosomal subunit protein uL3 (243 aa).

Disordered regions lie at residues 139-164 (VSHR…KMPG) and 218-243 (KPGK…QEGV). Gln-151 bears the N5-methylglutamine mark. Positions 231 to 243 (QTAAAPAAEQEGV) are enriched in low complexity.

The protein belongs to the universal ribosomal protein uL3 family. Part of the 50S ribosomal subunit. Forms a cluster with proteins L14 and L19. Post-translationally, methylated by PrmB.

Functionally, one of the primary rRNA binding proteins, it binds directly near the 3'-end of the 23S rRNA, where it nucleates assembly of the 50S subunit. This chain is Large ribosomal subunit protein uL3, found in Rhodopseudomonas palustris (strain BisB18).